Here is a 350-residue protein sequence, read N- to C-terminus: Calcium uniporter protein, mitochondrial (350 aa).

The transit peptide at 1–49 (MAAAAGRSLLLLLCSRGGGGGAGGCGALTAGCFPGLGVSRHRPHQQHRT) directs the protein to the mitochondrion. Residues 50-232 (AHQRPASWQS…ISRKAEKRTT (183 aa)) are Mitochondrial matrix-facing. 2 positions are modified to phosphoserine; by CaMK2: Ser56 and Ser91. The N-terminal MCU domain stretch occupies residues 74 to 164 (VTVVYQNGLP…LTYHVRPPKR (91 aa)). S-glutathionyl cysteine is present on Cys96. Residues 191-220 (IEQHQLNKERELVERLEDLKQQLAPLEKVR) adopt a coiled-coil conformation. The helical transmembrane segment at 233–256 (LVLWGGLAYMATQFGILARLTWWE) threads the bilayer. At 257 to 264 (YSWDIMEP) the chain is on the mitochondrial intermembrane side. Residues 259–267 (WDIMEPVTY) carry the Selectivity filter motif. Glu263 serves as a coordination point for Ca(2+). Residues 265 to 282 (VTYFITYGSAMAMYAYFV) traverse the membrane as a helical segment. Residues 283–350 (MTRQEYVYPE…LPLRQIGEKE (68 aa)) lie on the Mitochondrial matrix side of the membrane. Residues 284 to 289 (TRQEYV) form a juxtamembrane helix region. Residues 310 to 338 (RFDLEKYNQLKDAIAQAEMDLKRLRDPLQ) are a coiled coil. Lys331 is subject to N6-acetyllysine.

The protein belongs to the MCU (TC 1.A.77) family. As to quaternary structure, homotetramer. Component of the uniplex complex, composed of MCU, EMRE/SMDT1, MICU1 and MICU2 (or MICU3) in a 4:4:1:1 stoichiometry. Interacts with CCDC109B/MCUB; this inhibits channel activity. Interacts with MCUR1. Interactions with MICU1 and MCUR1 are mutually exclusive. Interacts with SLC25A23. Phosphorylation by CaMK2 in heart leads to increased MCU current. The regulation of MCU by CaMK2 is however subject to discussion: another group was unable to reproduce these results. Phosphorylated on tyrosines by PTK2B/PYK2, promoting oligomerization. In terms of processing, glutathionylation at Cys-96 in response to reactive oxygen species (ROS) promotes MCU higher-order assembly, leading to constitutive activation of the MCU channel and mitochondrial calcium overload. Post-translationally, undergoes proteolytic degradation by SPG7. As to expression, detected in heart muscle (at protein level). Expressed in skeletal muscle, heart, kidney, liver, brain, lung, white fat and spleen.

It localises to the mitochondrion inner membrane. It catalyses the reaction Ca(2+)(in) = Ca(2+)(out). MCU channel activity is regulated by the heterodimer composed of MICU1 and either MICU2 or MICU3, which act as calcium-sensors. At low calcium levels, MICU1 occludes the pore of the MCU channel, preventing mitochondrial calcium uptake. At higher calcium levels, calcium-binding to MICU1 and MICU2 (or MICU3) induces a conformational change that weakens MCU-MICU1 interactions and moves the MICU1-MICU2 heterodimer away from the pore, allowing calcium permeation through the channel. MCU channel activity is gated by EMRE/SMDT1 via the juxtamembrane helix loop. Inhibited by ruthenium red or its derivative Ru360. Its function is as follows. Channel-forming and calcium-conducting subunit of the mitochondrial inner membrane calcium uniporter complex (uniplex), which mediates calcium uptake into the mitochondrial matrix. MCU channel activity is regulated by the calcium-sensor subunits of the uniplex MICU1 and MICU2 (or MICU3). Mitochondrial calcium homeostasis plays key roles in cellular physiology and regulates ATP production, cytoplasmic calcium signals and activation of cell death pathways. Involved in buffering the amplitude of systolic calcium rises in cardiomyocytes. While dispensable for baseline homeostatic cardiac function, acts as a key regulator of short-term mitochondrial calcium loading underlying a 'fight-or-flight' response during acute stress: acts by mediating a rapid increase of mitochondrial calcium in pacemaker cells. Participates in mitochondrial permeability transition during ischemia-reperfusion injury. Mitochondrial calcium uptake in skeletal muscle cells is involved in muscle size in adults. Regulates synaptic vesicle endocytosis kinetics in central nerve terminal. Regulates glucose-dependent insulin secretion in pancreatic beta-cells by regulating mitochondrial calcium uptake. Involved in antigen processing and presentation. This Mus musculus (Mouse) protein is Calcium uniporter protein, mitochondrial.